A 216-amino-acid polypeptide reads, in one-letter code: Orotate phosphoribosyltransferase (216 aa).

Position 30 (K30) interacts with 5-phospho-alpha-D-ribose 1-diphosphate. 38 to 39 (FF) is an orotate binding site. Residues 75-76 (YK), R102, K103, K106, H108, and 128-136 (DDVITAGTA) each bind 5-phospho-alpha-D-ribose 1-diphosphate. 2 residues coordinate orotate: T132 and R160.

The protein belongs to the purine/pyrimidine phosphoribosyltransferase family. PyrE subfamily. Homodimer. It depends on Mg(2+) as a cofactor.

The catalysed reaction is orotidine 5'-phosphate + diphosphate = orotate + 5-phospho-alpha-D-ribose 1-diphosphate. The protein operates within pyrimidine metabolism; UMP biosynthesis via de novo pathway; UMP from orotate: step 1/2. Functionally, catalyzes the transfer of a ribosyl phosphate group from 5-phosphoribose 1-diphosphate to orotate, leading to the formation of orotidine monophosphate (OMP). The protein is Orotate phosphoribosyltransferase of Acinetobacter baumannii (strain ATCC 17978 / DSM 105126 / CIP 53.77 / LMG 1025 / NCDC KC755 / 5377).